Here is a 360-residue protein sequence, read N- to C-terminus: DNA integrity scanning protein DisA (360 aa).

The 139-residue stretch at 9–147 (DDEIIEVLRM…GSRKYILRET (139 aa)) folds into the DAC domain. ATP contacts are provided by residues Gly76, Leu94, and 107–111 (TRHKT).

Belongs to the DisA family. As to quaternary structure, homooctamer. Mg(2+) is required as a cofactor.

The catalysed reaction is 2 ATP = 3',3'-c-di-AMP + 2 diphosphate. In terms of biological role, participates in a DNA-damage check-point that is active prior to asymmetric division when DNA is damaged. DisA forms globular foci that rapidly scan along the chromosomes during sporulation, searching for lesions. When a lesion is present, DisA pauses at the lesion site. This triggers a cellular response that culminates in a temporary block in sporulation initiation. Its function is as follows. Also has diadenylate cyclase activity, catalyzing the condensation of 2 ATP molecules into cyclic di-AMP (c-di-AMP). c-di-AMP acts as a signaling molecule that couples DNA integrity with progression of sporulation. The rise in c-di-AMP level generated by DisA while scanning the chromosome, operates as a positive signal that advances sporulation; upon encountering a lesion, the DisA focus arrests at the damaged site and halts c-di-AMP synthesis. The sequence is that of DNA integrity scanning protein DisA from Acetivibrio thermocellus (strain ATCC 27405 / DSM 1237 / JCM 9322 / NBRC 103400 / NCIMB 10682 / NRRL B-4536 / VPI 7372) (Clostridium thermocellum).